Consider the following 411-residue polypeptide: AT-hook motif nuclear-localized protein 14 (411 aa).

Disordered stretches follow at residues Met1–Thr32, Ala54–Val164, Lys289–Gly348, and Thr366–Asp411. Residues His7–His19 are compositionally biased toward basic residues. Residues Gln20–Gln29 are compositionally biased toward low complexity. The span at Ala54 to Gly66 shows a compositional bias: polar residues. The Bipartite nuclear localization signal motif lies at Lys105–Lys113. The a.T hook DNA-binding region spans Lys105–Pro117. Composition is skewed to low complexity over residues Ala120–Ala135 and Val144–Ser159. Residues Gly165–Ser305 enclose the PPC domain. Residues Arg306 to Gln315 show a composition bias toward polar residues. Over residues Arg374–Asp390 the composition is skewed to gly residues.

The protein resides in the nucleus. Functionally, transcription factor that specifically binds AT-rich DNA sequences related to the nuclear matrix attachment regions (MARs). This is AT-hook motif nuclear-localized protein 14 from Arabidopsis thaliana (Mouse-ear cress).